The following is a 257-amino-acid chain: ECF RNA polymerase sigma factor SigE (257 aa).

The tract at residues methionine 87–methionine 153 is sigma-70 factor domain-2. The short motif at asparagine 111–aspartate 114 is the Polymerase core binding element. The interval serine 186 to histidine 236 is sigma-70 factor domain-4. The H-T-H motif DNA-binding region spans aspartate 211–threonine 230.

It belongs to the sigma-70 factor family. ECF subfamily. Interacts transiently with the RNA polymerase catalytic core formed by RpoA, RpoB, RpoC and RpoZ (2 alpha, 1 beta, 1 beta' and 1 omega subunit) to form the RNA polymerase holoenzyme that can initiate transcription. Interacts (via sigma-70 factor domain 4) with RseA; interaction is abrogated by treatment of cells with H(2)O(2) or detergent.

Sigma factors are initiation factors that promote the attachment of RNA polymerase to specific initiation sites and are then released. Extracytoplasmic function (ECF) sigma factors are held in an inactive form by an anti-sigma factor until released. This Mycolicibacterium smegmatis (strain ATCC 700084 / mc(2)155) (Mycobacterium smegmatis) protein is ECF RNA polymerase sigma factor SigE (sigE).